We begin with the raw amino-acid sequence, 912 residues long: Metabotropic glutamate receptor 4 (912 aa).

The N-terminal stretch at 1–32 is a signal peptide; the sequence is MSGKGGWAWWWARLPLCLLLSLYGSWVPSSLG. Topologically, residues 33-586 are extracellular; the sequence is KPKGHPHMNS…PIVKLEWDSP (554 aa). A disulfide bridge connects residues cysteine 67 and cysteine 109. Asparagine 98 carries an N-linked (GlcNAc...) asparagine glycan. L-glutamate-binding positions include serine 159, 180–182, and tyrosine 230; that span reads AST. 7 disulfide bridges follow: cysteine 249-cysteine 538, cysteine 372-cysteine 388, cysteine 428-cysteine 435, cysteine 520-cysteine 539, cysteine 524-cysteine 542, cysteine 545-cysteine 557, and cysteine 560-cysteine 573. Asparagine 301 carries N-linked (GlcNAc...) asparagine glycosylation. Aspartate 312 is a binding site for L-glutamate. Lysine 405 lines the L-glutamate pocket. Residues 587-607 form a helical membrane-spanning segment; that stretch reads WAVLPLFLAVVGIAATLFVVV. Topologically, residues 608–624 are cytoplasmic; the sequence is TFVRYNDTPIVKASGRE. Residues 625 to 645 traverse the membrane as a helical segment; it reads LSYVLLAGIFLCYATTFLMIA. At 646–653 the chain is on the extracellular side; the sequence is EPDLGTCS. Residues 654-671 traverse the membrane as a helical segment; that stretch reads LRRIFLGLGMSISYAALL. Residues 672 to 699 are Cytoplasmic-facing; that stretch reads TKTNRIYRIFEQGKRSVSAPRFISPASQ. A helical membrane pass occupies residues 700–720; that stretch reads LAITFVLISLQLLCICVWFVV. Residues 721-751 lie on the Extracellular side of the membrane; the sequence is DPSHSVVDFQDQRTLDPRFARGVLKCDISDL. Residues 752-772 traverse the membrane as a helical segment; sequence SLICLLGYSMLLMVTCTVYAI. The Cytoplasmic portion of the chain corresponds to 773–786; the sequence is KTRGVPETFNEAKP. A helical membrane pass occupies residues 787–807; the sequence is IGFTMYTTCIVWLAFIPIFFG. Over 808–826 the chain is Extracellular; it reads TSQSADKLYIQTTTLTVSV. A helical membrane pass occupies residues 827 to 847; that stretch reads SLSASVSLGMLYMPKVYIILF. At 848-912 the chain is on the cytoplasmic side; sequence HPEQNVPKRK…TYVTYTNHAI (65 aa).

This sequence belongs to the G-protein coupled receptor 3 family. Interacts with PICK1.

It is found in the cell membrane. Its function is as follows. G-protein coupled receptor for glutamate. Ligand binding causes a conformation change that triggers signaling via guanine nucleotide-binding proteins (G proteins) and modulates the activity of down-stream effectors. Signaling inhibits adenylate cyclase activity. This chain is Metabotropic glutamate receptor 4 (Grm4), found in Mus musculus (Mouse).